A 293-amino-acid chain; its full sequence is Small ribosomal subunit protein uS3 (293 aa).

A KH type-2 domain is found at Ile-39–Lys-110.

Belongs to the universal ribosomal protein uS3 family. As to quaternary structure, part of the 30S ribosomal subunit. Forms a tight complex with proteins S10 and S14.

Binds the lower part of the 30S subunit head. Binds mRNA in the 70S ribosome, positioning it for translation. This chain is Small ribosomal subunit protein uS3, found in Borreliella burgdorferi (strain ATCC 35210 / DSM 4680 / CIP 102532 / B31) (Borrelia burgdorferi).